Reading from the N-terminus, the 68-residue chain is Large ribosomal subunit protein bL32 (68 aa).

A disordered region spans residues methionine 1–aspartate 20.

The protein belongs to the bacterial ribosomal protein bL32 family.

The polypeptide is Large ribosomal subunit protein bL32 (Ruegeria sp. (strain TM1040) (Silicibacter sp.)).